Reading from the N-terminus, the 697-residue chain is Lebercilin (697 aa).

The disordered stretch occupies residues 1–90; that stretch reads MGERAGSPGT…VGFRSQSLNR (90 aa). A phosphoserine mark is found at Ser7 and Ser45. The segment covering 32–45 has biased composition (low complexity); that stretch reads SSGRSSLVSSSPAS. Coiled-coil stretches lie at residues 103-297 and 389-485; these read RILS…IKNI and EEKF…RNLK. Disordered stretches follow at residues 412 to 432, 522 to 548, and 606 to 697; these read WERE…EREE, HHLQ…PASP, and EQLF…VALR. Residues 416–432 show a composition bias toward basic and acidic residues; it reads ELDKKQKEKASLLEREE. Positions 527–547 are enriched in polar residues; sequence ISFSTPKGEGQNSGNVRSPAS. Over residues 612–626 the composition is skewed to low complexity; it reads SGSSTISSKSSDPNS. Acidic residues predominate over residues 686-697; sequence SVEDEIEEVALR.

The protein belongs to the LCA5 family. In terms of assembly, interacts with NINL. Interacts with OFD1. Interacts with FAM161A. Interacts with components of the IFT complex B. Widely expressed.

The protein resides in the cytoplasm. It is found in the cytoskeleton. Its subcellular location is the cilium axoneme. It localises to the cilium basal body. The protein localises to the microtubule organizing center. The protein resides in the centrosome. It is found in the cell projection. Its subcellular location is the cilium. Its function is as follows. Involved in intraflagellar protein (IFT) transport in photoreceptor cilia. This chain is Lebercilin (LCA5), found in Homo sapiens (Human).